The chain runs to 101 residues: A-type ATP synthase subunit K (101 aa).

A run of 3 helical transmembrane segments spans residues 5 to 25 (WLPFLLLPLLVSATIFSAQAP), 37 to 57 (IGAGLAIGLAAIGAGVAVGMA), and 75 to 95 (ILIFVAIGEGIAVYGILFAVL).

It belongs to the V-ATPase proteolipid subunit family. In terms of assembly, has multiple subunits with at least A(3), B(3), C, D, E, F, H, I and proteolipid K(x). In terms of processing, the N-terminus is blocked.

Its subcellular location is the cell membrane. In terms of biological role, component of the A-type ATP synthase that produces ATP from ADP in the presence of a proton gradient across the membrane. In Sulfurisphaera tokodaii (strain DSM 16993 / JCM 10545 / NBRC 100140 / 7) (Sulfolobus tokodaii), this protein is A-type ATP synthase subunit K.